We begin with the raw amino-acid sequence, 184 residues long: CASP-like protein 1U1 (184 aa).

The Cytoplasmic segment spans residues Met1 to Ser30. The helical transmembrane segment at Thr31–Ile51 threads the bilayer. Topologically, residues Thr52–Trp76 are extracellular. The chain crosses the membrane as a helical span at residues Phe77–Ile97. The Cytoplasmic segment spans residues Ser98–Asp111. Residues Leu112 to Gly132 form a helical membrane-spanning segment. Topologically, residues Lys133–His154 are extracellular. A helical transmembrane segment spans residues Val155 to Leu175. The Cytoplasmic portion of the chain corresponds to Gly176–Val184.

The protein belongs to the Casparian strip membrane proteins (CASP) family. In terms of assembly, homodimer and heterodimers.

The protein localises to the cell membrane. The polypeptide is CASP-like protein 1U1 (Marchantia polymorpha (Common liverwort)).